An 853-amino-acid chain; its full sequence is DNA mismatch repair protein MutS (853 aa).

614-621 (GPNMGGKS) is an ATP binding site.

It belongs to the DNA mismatch repair MutS family.

In terms of biological role, this protein is involved in the repair of mismatches in DNA. It is possible that it carries out the mismatch recognition step. This protein has a weak ATPase activity. This Escherichia coli (strain 55989 / EAEC) protein is DNA mismatch repair protein MutS.